A 277-amino-acid chain; its full sequence is MALKHYKPITNGRRNMTSLDFAEITKTTPEKSLLQPLPKRAGRNNQGKLTVRHHGGGHKRQYRVIDFKRNKDGIPAKVDSIQYDPNRSANIALLVYADGEKRYIIAPKGLQVGQTIENGEEADIKTGNALPLANIPVGTTIHNIELKPGRGGQIARSAGASAQVLGKEGKYVLVRLRSGEVRMILSTCRATVGQVGNLQHELVNVGKAGRSRWKGIRPTVRGSVMNPNDHPHGGGEGRAPIGRPSPMSPWGKPTLGKKTRRGKKSSDKLIVRGRKRK.

Disordered regions lie at residues 35–58 (QPLP…GGGH) and 213–277 (WKGI…RKRK).

It belongs to the universal ribosomal protein uL2 family. As to quaternary structure, part of the 50S ribosomal subunit. Forms a bridge to the 30S subunit in the 70S ribosome.

Functionally, one of the primary rRNA binding proteins. Required for association of the 30S and 50S subunits to form the 70S ribosome, for tRNA binding and peptide bond formation. It has been suggested to have peptidyltransferase activity; this is somewhat controversial. Makes several contacts with the 16S rRNA in the 70S ribosome. The polypeptide is Large ribosomal subunit protein uL2 (Staphylococcus carnosus (strain TM300)).